Reading from the N-terminus, the 338-residue chain is Mas-related G-protein coupled receptor member B2 (338 aa).

The Extracellular portion of the chain corresponds to 1–40 (MSGDFLIKNLSTSAWKTNITVLNGSYYIDTSVCVTRNQAM). Residues Asn9, Asn18, and Asn23 are each glycosylated (N-linked (GlcNAc...) asparagine). The chain crosses the membrane as a helical span at residues 41–61 (ILLSIIISLVGMGLNAIVLWF). The Cytoplasmic segment spans residues 62–89 (LGIRMHTNAFTVYILNLAMADFLYLCSQ). A helical transmembrane segment spans residues 90-110 (FVICLLIAFYIFYSIDINIPL). Val111 is a topological domain (extracellular). The chain crosses the membrane as a helical span at residues 112–132 (LYVVPIFAYLSGLSILSTISI). Residues 133–157 (ERCLSVIWPIWYRCKRPRHTSAITC) are Cytoplasmic-facing. A helical membrane pass occupies residues 158-178 (FVLWVMSLLLGLLEGKACGLL). The Extracellular segment spans residues 179-191 (FNSFDSYWCETFD). Residues 192–212 (VITNIWSVVFFGVLCGSSLTL) traverse the membrane as a helical segment. Residues 213–231 (LVRIFCGSQRIPMTRLYVT) are Cytoplasmic-facing. The chain crosses the membrane as a helical span at residues 232 to 252 (ITLTVLVFLIFGLPFGIYWIL). At 253–268 (YQWISNFYYVEICNFY) the chain is on the extracellular side. A helical transmembrane segment spans residues 269 to 289 (LEILFLSCVNSCMNPIIYFLV). The Cytoplasmic portion of the chain corresponds to 290–338 (GSIRHRRFRRKTLKLLLQRAMQDTPEEEQSGNKSSSEHPEELETVQSCS). The interval 310-338 (MQDTPEEEQSGNKSSSEHPEELETVQSCS) is disordered.

Belongs to the G-protein coupled receptor 1 family. Mas subfamily. Mast cell-specific.

Its subcellular location is the cell membrane. Mast cell-specific receptor for basic secretagogues, i.e. cationic amphiphilic drugs, as well as endo- or exogenous peptides, consisting of a basic head group and a hydrophobic core. Recognizes and binds small molecules containing a cyclized tetrahydroisoquinoline (THIQ), such as non-steroidal neuromuscular blocking drugs (NMBDs), including tubocurarine and atracurium. In response to these compounds, mediates pseudo-allergic reactions characterized by histamine release, inflammation and airway contraction. The protein is Mas-related G-protein coupled receptor member B2 (Mrgprb2) of Mus musculus (Mouse).